A 104-amino-acid chain; its full sequence is DNA-directed RNA polymerase subunit omega (104 aa).

It belongs to the RNA polymerase subunit omega family. The RNAP catalytic core consists of 2 alpha, 1 beta, 1 beta' and 1 omega subunit. When a sigma factor is associated with the core the holoenzyme is formed, which can initiate transcription.

It catalyses the reaction RNA(n) + a ribonucleoside 5'-triphosphate = RNA(n+1) + diphosphate. Promotes RNA polymerase assembly. Latches the N- and C-terminal regions of the beta' subunit thereby facilitating its interaction with the beta and alpha subunits. The polypeptide is DNA-directed RNA polymerase subunit omega (Streptococcus thermophilus (strain CNRZ 1066)).